A 324-amino-acid polypeptide reads, in one-letter code: N-acetyl-gamma-glutamyl-phosphate reductase (324 aa).

Residue Cys131 is part of the active site.

This sequence belongs to the NAGSA dehydrogenase family. Type 1 subfamily.

The protein localises to the cytoplasm. It catalyses the reaction N-acetyl-L-glutamate 5-semialdehyde + phosphate + NADP(+) = N-acetyl-L-glutamyl 5-phosphate + NADPH + H(+). The protein operates within amino-acid biosynthesis; L-arginine biosynthesis; N(2)-acetyl-L-ornithine from L-glutamate: step 3/4. Functionally, catalyzes the NADPH-dependent reduction of N-acetyl-5-glutamyl phosphate to yield N-acetyl-L-glutamate 5-semialdehyde. The polypeptide is N-acetyl-gamma-glutamyl-phosphate reductase (Bradyrhizobium sp. (strain BTAi1 / ATCC BAA-1182)).